The primary structure comprises 85 residues: MGTQPLSGLLCTQGHVKRTSITHSVLLLCYALSTMRTLRHLLGLQQTQCALTVMTCASVSWNTVRLALRYSSCLTLTLVMPRSTR.

The chain is Protein 19.2 from Escherichia coli (Bacteriophage T7).